A 312-amino-acid polypeptide reads, in one-letter code: uncharacterized protein (312 aa).

The protein belongs to the mimivirus R69 family.

This is an uncharacterized protein from Acanthamoeba polyphaga mimivirus (APMV).